We begin with the raw amino-acid sequence, 251 residues long: Triosephosphate isomerase (251 aa).

9–11 (NWK) lines the substrate pocket. His-95 serves as the catalytic Electrophile. The active-site Proton acceptor is Glu-167. Substrate is bound by residues Gly-173, Ser-213, and 234–235 (GG).

Belongs to the triosephosphate isomerase family. As to quaternary structure, homodimer.

The protein resides in the cytoplasm. It carries out the reaction D-glyceraldehyde 3-phosphate = dihydroxyacetone phosphate. The protein operates within carbohydrate biosynthesis; gluconeogenesis. It participates in carbohydrate degradation; glycolysis; D-glyceraldehyde 3-phosphate from glycerone phosphate: step 1/1. Functionally, involved in the gluconeogenesis. Catalyzes stereospecifically the conversion of dihydroxyacetone phosphate (DHAP) to D-glyceraldehyde-3-phosphate (G3P). The polypeptide is Triosephosphate isomerase (Ligilactobacillus salivarius (strain UCC118) (Lactobacillus salivarius)).